The following is a 1797-amino-acid chain: Non-reducing polyketide synthase nscA (1797 aa).

The interval 17-256 (SDDLKDLFRR…PLPVYDGLCH (240 aa)) is N-terminal acylcarrier protein transacylase domain (SAT). Positions 392–825 (SSKLAIVGMA…GGNTTLLLED (434 aa)) constitute a Ketosynthase family 3 (KS3) domain. Catalysis depends on for beta-ketoacyl synthase activity residues cysteine 565, histidine 700, and histidine 743. Positions 931-1251 (FTGQGAYYSG…SLVTLHLAGL (321 aa)) are malonyl-CoA:ACP transacylase (MAT) domain. Positions 1318–1637 (TSLIHQITAE…RLLMDRFFSP (320 aa)) are product template (PT) domain. The tract at residues 1322–1458 (HQITAETIES…ATVRFEDPAA (137 aa)) is N-terminal hotdog fold. The region spanning 1322–1632 (HQITAETIES…FRRVPRLLMD (311 aa)) is the PKS/mFAS DH domain. Catalysis depends on histidine 1354, which acts as the Proton acceptor; for dehydratase activity. The tract at residues 1482–1632 (VEGKASRLSK…FRRVPRLLMD (151 aa)) is C-terminal hotdog fold. Aspartate 1543 acts as the Proton donor; for dehydratase activity in catalysis. A compositionally biased stretch (polar residues) spans 1663–1686 (SVPEISAPSPSIVVSDSTANNTLT). The disordered stretch occupies residues 1663 to 1723 (SVPEISAPSP…PESESAEPLG (61 aa)). Positions 1698 to 1709 (SSSESSTPKESP) are enriched in low complexity. The Carrier domain maps to 1720–1797 (EPLGNTVSQC…EMTAWIEEYC (78 aa)). At serine 1757 the chain carries O-(pantetheine 4'-phosphoryl)serine.

Pantetheine 4'-phosphate serves as cofactor.

The protein operates within secondary metabolite biosynthesis. Its function is as follows. Non-reducing polyketide synthase; part of the gene cluster that mediates the biosynthesis of neosartoricin B, a prenylated anthracenone that probably exhibits T-cell antiproliferative activity, suggestive of a physiological role as an immunosuppressive agent. The non-reducing polyketide synthase nscA probably synthesizes and cyclizes the decaketide backbone. The hydrolase nscB then mediates the product release through hydrolysis followed by spontaneous decarboxylation. The prenyltransferase nscD catalyzes the addition of the dimethylallyl group to the aromatic C5. The FAD-dependent monooxygenase nscC is then responsible for the stereospecific hydroxylation at C2. Neosartoricin B can be converted into two additional compounds neosartoricins C and D. Neosartoricin C is a spirocyclic compound that is cyclized through the attack of C3 hydroxyl on C14, followed by dehydration. On the other hand, neosartoricin D is a further cyclized compound in which attack of C2 on C14 in neosartoricin C results in the formation of the acetal-containing dioxabicyclo-octanone ring. Both of these compounds are novel and possibly represent related metabolites of the gene cluster. The polypeptide is Non-reducing polyketide synthase nscA (Arthroderma gypseum (strain ATCC MYA-4604 / CBS 118893) (Microsporum gypseum)).